The primary structure comprises 497 residues: Cytoplasmic dynein 1 light intermediate chain 2 (497 aa).

ATP is bound at residue 61–68 (GEDGSGKT). Disordered stretches follow at residues 187 to 206 (PEEGCQGSPQRRGPLTSGSD), 366 to 408 (QQES…IKNN), 423 to 461 (LSKKTGSPGSPSAGGVQSTAKKSGTEGEPQSFRSLTEQC), and 474 to 497 (QEELDRMTRKPDSMVTNSSTENEA). Phosphoserine is present on residues Ser-194, Ser-369, and Ser-377. The residue at position 383 (Arg-383) is an Omega-N-methylarginine. Residues 423-444 (LSKKTGSPGSPSAGGVQSTAKK) show a composition bias toward polar residues. Position 427 is a phosphothreonine (Thr-427). 2 positions are modified to phosphoserine: Ser-429 and Ser-432. Positions 476–485 (ELDRMTRKPD) are enriched in basic and acidic residues. Positions 487-497 (MVTNSSTENEA) are enriched in polar residues.

The protein belongs to the dynein light intermediate chain family. In terms of assembly, homodimer. The cytoplasmic dynein 1 complex consists of two catalytic heavy chains (HCs) and a number of non-catalytic subunits presented by intermediate chains (ICs), light intermediate chains (LICs) and light chains (LCs); the composition seems to vary in respect to the IC, LIC and LC composition. The heavy chain homodimer serves as a scaffold for the probable homodimeric assembly of the respective non-catalytic subunits. The ICs and LICs bind directly to the HC dimer and the LCs assemble on the IC dimer. Self-associates. Interacts with DYNC1H1; DYNC1LI1 and DYNC1LI2 bind mutually exclusive to DYNC1H1. As to expression, ubiquitous.

It is found in the cytoplasm. The protein localises to the cytoskeleton. Its function is as follows. Acts as one of several non-catalytic accessory components of the cytoplasmic dynein 1 complex that are thought to be involved in linking dynein to cargos and to adapter proteins that regulate dynein function. Cytoplasmic dynein 1 acts as a motor for the intracellular retrograde motility of vesicles and organelles along microtubules. May play a role in binding dynein to membranous organelles or chromosomes. The chain is Cytoplasmic dynein 1 light intermediate chain 2 (Dync1li2) from Rattus norvegicus (Rat).